A 58-amino-acid chain; its full sequence is Leucine zipper protein 6 (58 aa).

In terms of tissue distribution, widely expressed, highest levels found in brain, placenta, spleen, testis, and ovary. Up-regulated in some tumor cells.

In Homo sapiens (Human), this protein is Leucine zipper protein 6 (LUZP6).